Here is a 394-residue protein sequence, read N- to C-terminus: Homoserine O-succinyltransferase (394 aa).

Residues 54 to 368 (NAVLICHALS…SSPAGHDAFL (315 aa)) enclose the AB hydrolase-1 domain. The Nucleophile role is filled by serine 160. Residue arginine 236 coordinates substrate. Residues aspartate 331 and histidine 364 contribute to the active site. Residue aspartate 365 coordinates substrate.

The protein belongs to the AB hydrolase superfamily. MetX family. Homodimer.

The protein resides in the cytoplasm. The enzyme catalyses L-homoserine + succinyl-CoA = O-succinyl-L-homoserine + CoA. Its pathway is amino-acid biosynthesis; L-methionine biosynthesis via de novo pathway; O-succinyl-L-homoserine from L-homoserine: step 1/1. Functionally, transfers a succinyl group from succinyl-CoA to L-homoserine, forming succinyl-L-homoserine. The chain is Homoserine O-succinyltransferase from Magnetococcus marinus (strain ATCC BAA-1437 / JCM 17883 / MC-1).